The sequence spans 470 residues: Probable citrate synthase, mitochondrial (470 aa).

Catalysis depends on residues histidine 297, histidine 351, and aspartate 406.

The protein belongs to the citrate synthase family. As to quaternary structure, homodimer.

It is found in the mitochondrion matrix. The enzyme catalyses oxaloacetate + acetyl-CoA + H2O = citrate + CoA + H(+). It participates in carbohydrate metabolism; tricarboxylic acid cycle; isocitrate from oxaloacetate: step 1/2. The protein is Probable citrate synthase, mitochondrial of Leishmania infantum.